The primary structure comprises 382 residues: Galactokinase (382 aa).

34 to 37 (EHTD) provides a ligand contact to substrate. Residue 124 to 130 (GAGLSSS) coordinates ATP. The Mg(2+) site is built by serine 130 and glutamate 162. Aspartate 174 functions as the Proton acceptor in the catalytic mechanism. Tyrosine 223 contacts substrate.

This sequence belongs to the GHMP kinase family. GalK subfamily.

Its subcellular location is the cytoplasm. The enzyme catalyses alpha-D-galactose + ATP = alpha-D-galactose 1-phosphate + ADP + H(+). Its pathway is carbohydrate metabolism; galactose metabolism. Functionally, catalyzes the transfer of the gamma-phosphate of ATP to D-galactose to form alpha-D-galactose-1-phosphate (Gal-1-P). In Salmonella typhi, this protein is Galactokinase.